Reading from the N-terminus, the 89-residue chain is uncharacterized protein (89 aa).

This is an uncharacterized protein from Klebsiella aerogenes (Enterobacter aerogenes).